Reading from the N-terminus, the 250-residue chain is UPF0259 membrane protein PC1_1998 (250 aa).

6 helical membrane-spanning segments follow: residues 20–40 (FISI…LNHA), 90–110 (FAAL…IQLV), 132–152 (LLFL…LLVI), 156–176 (LLAI…SGIF), 192–212 (ATAP…LVVS), and 222–242 (LGVV…IYLF).

It belongs to the UPF0259 family.

Its subcellular location is the cell inner membrane. In Pectobacterium carotovorum subsp. carotovorum (strain PC1), this protein is UPF0259 membrane protein PC1_1998.